The primary structure comprises 139 residues: Large ribosomal subunit protein uL16 (139 aa).

Residues 1–17 (MLMPKRVKYRKTQRGRM) show a composition bias toward basic residues. Positions 1–24 (MLMPKRVKYRKTQRGRMKGNSGRG) are disordered.

This sequence belongs to the universal ribosomal protein uL16 family. Part of the 50S ribosomal subunit.

In terms of biological role, binds 23S rRNA and is also seen to make contacts with the A and possibly P site tRNAs. In Pelodictyon phaeoclathratiforme (strain DSM 5477 / BU-1), this protein is Large ribosomal subunit protein uL16.